A 538-amino-acid chain; its full sequence is Putative cysteine ligase BshC (538 aa).

A coiled-coil region spans residues 460 to 484; the sequence is KINEQIELLERMLKRNVEKKHEVEL.

This sequence belongs to the BshC family.

In terms of biological role, involved in bacillithiol (BSH) biosynthesis. May catalyze the last step of the pathway, the addition of cysteine to glucosamine malate (GlcN-Mal) to generate BSH. The protein is Putative cysteine ligase BshC of Bacillus anthracis (strain A0248).